Reading from the N-terminus, the 638-residue chain is Cytoplasmic dynein 1 intermediate chain 2 (638 aa).

Basic and acidic residues-rich tracts occupy residues 1–13 (MSDK…ELER) and 20–43 (QIRE…KKEA). Disordered stretches follow at residues 1–135 (MSDK…GRGP) and 154–209 (VTYT…HELT). An N-acetylserine modification is found at serine 2. A Diphosphoserine modification is found at serine 51. 2 positions are modified to phosphoserine: serine 51 and serine 90. Residues 88–97 (PSSKSVSTPS) show a composition bias toward low complexity. Threonine 95 bears the Phosphothreonine mark. Serine 97, serine 101, and serine 104 each carry phosphoserine. Positions 133-165 (RGPIKLGMAKITQVDFPPREIVTYTKETQTPVT) are interaction with DYNLT1. Residues 190–209 (EKILKKDEENDSKAPPHELT) show a composition bias toward basic and acidic residues. 6 WD repeats span residues 277–326 (SKHR…TTPE), 330–370 (HCQS…RTPV), 379–420 (AHTH…HPQD), 429–469 (SKAV…AGIS), 474–519 (GHQG…PLYS), and 568–607 (EGNP…AVPR).

Belongs to the dynein intermediate chain family. As to quaternary structure, homodimer. The cytoplasmic dynein 1 complex consists of two catalytic heavy chains (HCs) and a number of non-catalytic subunits presented by intermediate chains (ICs), light intermediate chains (LICs) and light chains (LCs); the composition seems to vary in respect to the IC, LIC and LC composition. The heavy chain homodimer serves as a scaffold for the probable homodimeric assembly of the respective non-catalytic subunits. The ICs and LICs bind directly to the HC dimer and the LCs assemble on the IC dimer. Interacts with DYNLT3. Interacts with DYNLT1. Interacts (dephosphorylated at Ser-90) with DCTN1. Interacts with BICD2. Interacts with SPEF2. Interacts with CFAP61. Post-translationally, the phosphorylation status of Ser-90 appears to be involved in dynactin-dependent target binding. Pyrophosphorylation by 5-diphosphoinositol pentakisphosphate (5-IP7) promotes interaction with DCTN1. Serine pyrophosphorylation is achieved by Mg(2+)-dependent, but enzyme independent transfer of a beta-phosphate from a inositol pyrophosphate to a pre-phosphorylated serine residue. As to expression, skeletal muscle, testis, kidney, brain, heart and spleen.

It localises to the cytoplasm. The protein resides in the cytoskeleton. In terms of biological role, acts as one of several non-catalytic accessory components of the cytoplasmic dynein 1 complex that are thought to be involved in linking dynein to cargos and to adapter proteins that regulate dynein function. Cytoplasmic dynein 1 acts as a motor for the intracellular retrograde motility of vesicles and organelles along microtubules. The intermediate chains mediate the binding of dynein to dynactin via its 150 kDa component (p150-glued) DCTN1. Involved in membrane-transport, such as Golgi apparatus, late endosomes and lysosomes. The protein is Cytoplasmic dynein 1 intermediate chain 2 (Dync1i2) of Rattus norvegicus (Rat).